The following is a 763-amino-acid chain: Amine oxidase [copper-containing] 3 (763 aa).

The Cytoplasmic portion of the chain corresponds to 1 to 5 (MNQKT). Residues 6-26 (ILVLLILAVITIFALVCVLLV) traverse the membrane as a helical; Signal-anchor for type II membrane protein segment. At 27 to 763 (GRGGDGGEPS…AFSHGGFSHN (737 aa)) the chain is on the extracellular side. Ser43 is a glycosylation site (O-linked (GalNAc...) serine). An N-linked (GlcNAc...) asparagine glycan is attached at Asn137. A disulfide bridge links Cys198 with Cys199. O-linked (GalNAc...) threonine glycosylation occurs at Thr212. Asn232 and Asn294 each carry an N-linked (GlcNAc...) asparagine glycan. Residue Asp386 is the Proton acceptor of the active site. A disulfide bridge links Cys404 with Cys430. Residue Tyr471 is the Schiff-base intermediate with substrate; via topaquinone of the active site. Tyr471 bears the 2',4',5'-topaquinone mark. His520 and His522 together coordinate Cu(2+). Asp529, Leu530, Asp531, and Glu572 together coordinate Ca(2+). The N-linked (GlcNAc...) (complex) asparagine glycan is linked to Asn592. An N-linked (GlcNAc...) asparagine glycan is attached at Asn618. Positions 641, 663, and 665 each coordinate Ca(2+). A glycan (N-linked (GlcNAc...) asparagine) is linked at Asn666. Glu667, Asp673, and Leu674 together coordinate Ca(2+). Residue Thr679 is glycosylated (O-linked (GlcNAc) threonine). Cu(2+) is bound at residue His684. A disulfide bridge connects residues Cys734 and Cys741.

Belongs to the copper/topaquinone oxidase family. Homodimer; disulfide-linked. Can heterodimerize with isoform 2 leading to reduced surface expression. Probably forms heterodimers with AOC2. The cofactor is Cu(2+). Ca(2+) serves as cofactor. Requires L-topaquinone as cofactor. Topaquinone (TPQ) is generated by copper-dependent autoxidation of a specific tyrosyl residue. In terms of processing, N- and O-glycosylated. As to expression, strongly expressed on the high endothelial venules of peripheral lymph nodes and on hepatic endothelia. Also highly expressed in appendix, lung and small intestine. Expressed also in adipose tissue, in bone marrow, colon, heart, kidney, ovary, pancreas, placenta, prostate, skeletal muscle, spleen and testis. Isoform 2 seems to be the predominant transcript in fetal kidneys, fetal cartilage and fetal tonsils. The highest relative expression of isoform 2 occurs in skeletal muscle, heart, pancreas, kidney, and lung.

The protein resides in the cell membrane. The enzyme catalyses methylamine + O2 + H2O = formaldehyde + H2O2 + NH4(+). It catalyses the reaction benzylamine + O2 + H2O = benzaldehyde + H2O2 + NH4(+). The catalysed reaction is 2-phenylethylamine + O2 + H2O = 2-phenylacetaldehyde + H2O2 + NH4(+). In terms of biological role, catalyzes the oxidative deamination of primary amines to the corresponding aldehydes with the concomitant production of hydrogen peroxide and ammonia. Has a preference for the primary monoamines methylamine and benzylamine. Could also act on 2-phenylethylamine but much less efficiently. At endothelial cells surface can also function as a cell adhesion protein that participates in lymphocyte extravasation and recirculation by mediating the binding of lymphocytes to peripheral lymph node vascular endothelial cells in an L-selectin-independent fashion. Has no semicarbazide-sensitive amine oxidase (SSAO) activity. This chain is Amine oxidase [copper-containing] 3, found in Homo sapiens (Human).